The sequence spans 423 residues: MDIDQYMTDLGRRARHASRAMARASTAAKNAALDAVARAIERDAQALKDANARDVARAREKGLDAAFIDRLTLSDNALKTMVEGLRQVASLADPIGEIGNLKYRPSGIQVGQMRVPLGVIGIIYESRPNVTIDAAALCLKSGNATILRGGSEALESNAALAKLIGEGLEAAGLPQDAVQVVATADRAAVGKLITMTDYVDVIVPRGGKSLIERLINEARVPMIKHLDGICHVYVDDRADLAKALTVCDNAKTHRYGTCNTMETLLVASGIAATLLPPLGKLYRDKQVELRVDAAARAVLAEAGVGPLVDATDEDWHTEYLAPVLAIKVVDGLDAAIEHINHYGSHHTDAIVTEDHDRAMRFLREVDSASVMVNASTRFADGFEFGLGAEIGISNDKLHARGPVGLEGLTSLKYVVLGHGEGRQ.

The protein belongs to the gamma-glutamyl phosphate reductase family.

The protein localises to the cytoplasm. The catalysed reaction is L-glutamate 5-semialdehyde + phosphate + NADP(+) = L-glutamyl 5-phosphate + NADPH + H(+). Its pathway is amino-acid biosynthesis; L-proline biosynthesis; L-glutamate 5-semialdehyde from L-glutamate: step 2/2. Its function is as follows. Catalyzes the NADPH-dependent reduction of L-glutamate 5-phosphate into L-glutamate 5-semialdehyde and phosphate. The product spontaneously undergoes cyclization to form 1-pyrroline-5-carboxylate. The sequence is that of Gamma-glutamyl phosphate reductase from Burkholderia ambifaria (strain ATCC BAA-244 / DSM 16087 / CCUG 44356 / LMG 19182 / AMMD) (Burkholderia cepacia (strain AMMD)).